The sequence spans 439 residues: (p)ppApp synthetase toxin Tas1 (439 aa).

Its subcellular location is the secreted. It catalyses the reaction AMP + ATP = adenosine 3'-diphosphate,5'-phosphate + AMP + H(+). The catalysed reaction is ADP + ATP = adenosine 3'-diphosphate,5'-diphosphate + AMP. It carries out the reaction 2 ATP = adenosine 3'-diphosphate,5'-triphosphate + AMP. Functionally, type VI secretion exported toxin that pyrophosphorylates adenosine nucleotides to produce (p)ppApp. Thereby, depletes cellular ADP and ATP to dysregulate central metabolism in competitor cells. This Pseudomonas aeruginosa (strain UCBPP-PA14) protein is (p)ppApp synthetase toxin Tas1 (tas1).